Here is a 389-residue protein sequence, read N- to C-terminus: Succinate--CoA ligase [ADP-forming] subunit beta (389 aa).

Residues 9–244 (KKLFADYGLP…LTQEDPREAE (236 aa)) form the ATP-grasp domain. Residues lysine 46, 53–55 (GRG), glutamate 99, alanine 102, and glutamate 107 each bind ATP. 2 residues coordinate Mg(2+): asparagine 199 and aspartate 213. Residues asparagine 264 and 321–323 (GIV) each bind substrate.

It belongs to the succinate/malate CoA ligase beta subunit family. As to quaternary structure, heterotetramer of two alpha and two beta subunits. Mg(2+) serves as cofactor.

It catalyses the reaction succinate + ATP + CoA = succinyl-CoA + ADP + phosphate. It carries out the reaction GTP + succinate + CoA = succinyl-CoA + GDP + phosphate. It participates in carbohydrate metabolism; tricarboxylic acid cycle; succinate from succinyl-CoA (ligase route): step 1/1. In terms of biological role, succinyl-CoA synthetase functions in the citric acid cycle (TCA), coupling the hydrolysis of succinyl-CoA to the synthesis of either ATP or GTP and thus represents the only step of substrate-level phosphorylation in the TCA. The beta subunit provides nucleotide specificity of the enzyme and binds the substrate succinate, while the binding sites for coenzyme A and phosphate are found in the alpha subunit. This is Succinate--CoA ligase [ADP-forming] subunit beta from Histophilus somni (strain 2336) (Haemophilus somnus).